We begin with the raw amino-acid sequence, 475 residues long: D(1B) dopamine receptor (475 aa).

Residues 1–38 (MLPPGRNRTAQPARLGLQRQLAQVDAPAGSATPLGPAQ) are Extracellular-facing. Asparagine 7 carries an N-linked (GlcNAc...) asparagine glycan. Residues 39–64 (VVTAGLLTLLIVWTLLGNVLVCAAIV) traverse the membrane as a helical segment. Residues 65 to 75 (RSRHLRAKMTN) lie on the Cytoplasmic side of the membrane. Residues 76 to 102 (IFIVSLAVSDLFVALLVMPWKAVAEVA) traverse the membrane as a helical segment. Residues 103–111 (GYWPFGTFC) lie on the Extracellular side of the membrane. Cysteine 111 and cysteine 211 are oxidised to a cystine. The chain crosses the membrane as a helical span at residues 112–134 (DIWVAFDIMCSTASILNLCIISV). The Cytoplasmic portion of the chain corresponds to 135-153 (DRYWAISRPFRYERKMTQR). The chain crosses the membrane as a helical span at residues 154–179 (VALVMVGLAWTLSILISFIPVQLNWH). The Extracellular segment spans residues 180 to 215 (RDKAGSQGQEGLLSNGTPWEEGWELEGRTENCDSSL). A helical membrane pass occupies residues 216-240 (NRTYAISSSLISFYIPVAIMIVTYT). Over 241 to 289 (RIYRIAQVQIRRISSLERAAEHAQSCRSRGAYEPDPSLRASIKKETKVF) the chain is Cytoplasmic. The chain crosses the membrane as a helical span at residues 290–317 (KTLSMIMGVFVCCWLPFFILNCMVPFCS). Residues 318–335 (SGDAEGPKTGFPCVSETT) lie on the Extracellular side of the membrane. A helical membrane pass occupies residues 336–357 (FDIFVWFGWANSSLNPIIYAFN). The Cytoplasmic segment spans residues 358–475 (ADFRKVFAQL…LTPNCFDKTA (118 aa)). Cysteine 370 carries S-palmitoyl cysteine lipidation. Residues 415–443 (SGDREVGEEEEEGPFDHMSQISPTTPDGD) form a disordered region.

This sequence belongs to the G-protein coupled receptor 1 family. In terms of tissue distribution, brain, in the lateral mammillary nuclei, the anterior pretectal nuclei, and several layers of the hippocampus.

It is found in the cell membrane. Functionally, dopamine receptor whose activity is mediated by G proteins which activate adenylyl cyclase. The polypeptide is D(1B) dopamine receptor (Drd5) (Rattus norvegicus (Rat)).